A 1368-amino-acid chain; its full sequence is DNA-directed RNA polymerase subunit beta (1368 aa).

It belongs to the RNA polymerase beta chain family. As to quaternary structure, the RNAP catalytic core consists of 2 alpha, 1 beta, 1 beta' and 1 omega subunit. When a sigma factor is associated with the core the holoenzyme is formed, which can initiate transcription.

The catalysed reaction is RNA(n) + a ribonucleoside 5'-triphosphate = RNA(n+1) + diphosphate. DNA-dependent RNA polymerase catalyzes the transcription of DNA into RNA using the four ribonucleoside triphosphates as substrates. In Burkholderia ambifaria (strain MC40-6), this protein is DNA-directed RNA polymerase subunit beta.